The primary structure comprises 426 residues: Proline--tRNA ligase (426 aa).

The protein belongs to the class-II aminoacyl-tRNA synthetase family. ProS type 2 subfamily. Homodimer.

The protein resides in the cytoplasm. It catalyses the reaction tRNA(Pro) + L-proline + ATP = L-prolyl-tRNA(Pro) + AMP + diphosphate. Catalyzes the attachment of proline to tRNA(Pro) in a two-step reaction: proline is first activated by ATP to form Pro-AMP and then transferred to the acceptor end of tRNA(Pro). This chain is Proline--tRNA ligase, found in Rickettsia rickettsii (strain Iowa).